Here is a 133-residue protein sequence, read N- to C-terminus: Holo-[acyl-carrier-protein] synthase (133 aa).

Mg(2+) is bound by residues aspartate 8 and glutamate 56.

Belongs to the P-Pant transferase superfamily. AcpS family. Mg(2+) serves as cofactor.

It localises to the cytoplasm. It catalyses the reaction apo-[ACP] + CoA = holo-[ACP] + adenosine 3',5'-bisphosphate + H(+). Transfers the 4'-phosphopantetheine moiety from coenzyme A to a Ser of acyl-carrier-protein. This is Holo-[acyl-carrier-protein] synthase from Clostridium perfringens (strain SM101 / Type A).